A 188-amino-acid chain; its full sequence is MTEYKLVVVGAGGVGKSALTIQLIQNHFVDEYDPTIEDSYRKQVVIDGETCLLDILDTAGQEEYSAMRDQYMRTGEGFLCVFAINNTKSFEDIHHYREQIKRVKDSEDVPMVLVGNKYDLPTRTVDTKQAQDLARSYGIPFIETSAKTRQGVDDAFYTLVREIRKHKEKMSKEGKKKKKKSKTKCILM.

Residues 10–18 (GAGGVGKSA), 29–35 (VDEYDPT), 59–60 (AG), and 116–119 (NKYD) each bind GTP. The short motif at 32–40 (YDPTIEDSY) is the Effector region element. Positions 167–188 (KEKMSKEGKKKKKKSKTKCILM) are disordered. Cys185 is modified (cysteine methyl ester). Cys185 is lipidated: S-farnesyl cysteine. Residues 186 to 188 (ILM) constitute a propeptide, removed in mature form.

Belongs to the small GTPase superfamily. Ras family.

The protein resides in the cell membrane. The protein localises to the cytoplasm. It carries out the reaction GTP + H2O = GDP + phosphate + H(+). Alternates between an inactive form bound to GDP and an active form bound to GTP. Activated by a guanine nucleotide-exchange factor (GEF) and inactivated by a GTPase-activating protein (GAP). Ras proteins bind GDP/GTP and possess intrinsic GTPase activity. Plays an important role in the regulation of cell proliferation. May play a role in promoting oncogenic events by inducing transcriptional silencing of tumor suppressor genes (TSGs). In Kryptolebias marmoratus (Mangrove killifish), this protein is GTPase KRas (kras).